The sequence spans 154 residues: Large ribosomal subunit protein uL30 (154 aa).

The segment at 122 to 141 is disordered; that stretch reads RGGHDGIKTPASDGGQLGKH.

This sequence belongs to the universal ribosomal protein uL30 family. In terms of assembly, part of the 50S ribosomal subunit.

The chain is Large ribosomal subunit protein uL30 from Halobacterium salinarum (strain ATCC 29341 / DSM 671 / R1).